A 205-amino-acid polypeptide reads, in one-letter code: Holliday junction branch migration complex subunit RuvA (205 aa).

The tract at residues 1-64 (MIGKLKGVID…EDMIRLYGFA (64 aa)) is domain I. Positions 65 to 143 (TQLEREWFRL…AFAGEASGTI (79 aa)) are domain II. Residues 144–152 (GLKQELGAG) form a flexible linker region. The domain III stretch occupies residues 153 to 205 (AAPAPVADAVSALSNLGYSRDQAANAVAAALKETGEGADSAKLIRLGLKELSQ).

This sequence belongs to the RuvA family. In terms of assembly, homotetramer. Forms an RuvA(8)-RuvB(12)-Holliday junction (HJ) complex. HJ DNA is sandwiched between 2 RuvA tetramers; dsDNA enters through RuvA and exits via RuvB. An RuvB hexamer assembles on each DNA strand where it exits the tetramer. Each RuvB hexamer is contacted by two RuvA subunits (via domain III) on 2 adjacent RuvB subunits; this complex drives branch migration. In the full resolvosome a probable DNA-RuvA(4)-RuvB(12)-RuvC(2) complex forms which resolves the HJ.

It localises to the cytoplasm. In terms of biological role, the RuvA-RuvB-RuvC complex processes Holliday junction (HJ) DNA during genetic recombination and DNA repair, while the RuvA-RuvB complex plays an important role in the rescue of blocked DNA replication forks via replication fork reversal (RFR). RuvA specifically binds to HJ cruciform DNA, conferring on it an open structure. The RuvB hexamer acts as an ATP-dependent pump, pulling dsDNA into and through the RuvAB complex. HJ branch migration allows RuvC to scan DNA until it finds its consensus sequence, where it cleaves and resolves the cruciform DNA. In Brucella abortus (strain S19), this protein is Holliday junction branch migration complex subunit RuvA.